Here is a 348-residue protein sequence, read N- to C-terminus: N6-Methyl-AMP deaminase (348 aa).

His18 and His20 together coordinate Zn(2+). N(6)-methyl-AMP contacts are provided by residues His20, Asn22, His68, 100-103 (STPR), Asp142, and Gly175. Position 202 (His202) interacts with Zn(2+). N(6)-methyl-AMP contacts are provided by Glu205, Asp287, and Asp288. The active-site Proton donor is the Glu205. Residue Asp287 coordinates Zn(2+).

The protein belongs to the metallo-dependent hydrolases superfamily. Adenosine and AMP deaminases family. As to quaternary structure, monomer. The cofactor is Zn(2+).

The enzyme catalyses N(6)-methyl-AMP + H2O + H(+) = IMP + methylamine. Catalyzes the hydrolysis of the free cytosolic methylated adenosine nucleotide N(6)-methyl-AMP (N6-mAMP) to produce inositol monophosphate (IMP) and methylamine. Is required for the catabolism of cytosolic N6-mAMP, which is derived from the degradation of mRNA containing N6-methylated adenine (m6A). The protein is N6-Methyl-AMP deaminase (mapda) of Danio rerio (Zebrafish).